The sequence spans 60 residues: MAVPRRKTSPSRRGMRRSADALKRPTYAEDKDSGELRRPHHLDLKTGMYKGRQVIKKKDA.

Over residues methionine 1 to arginine 16 the composition is skewed to basic residues. Residues methionine 1–alanine 60 form a disordered region. Over residues arginine 17–leucine 44 the composition is skewed to basic and acidic residues.

The protein belongs to the bacterial ribosomal protein bL32 family.

This Rhodopseudomonas palustris (strain BisB5) protein is Large ribosomal subunit protein bL32.